The sequence spans 281 residues: 2,3,4,5-tetrahydropyridine-2,6-dicarboxylate N-succinyltransferase (281 aa).

Residues arginine 108 and aspartate 145 each coordinate substrate.

This sequence belongs to the transferase hexapeptide repeat family. In terms of assembly, homotrimer.

Its subcellular location is the cytoplasm. It carries out the reaction (S)-2,3,4,5-tetrahydrodipicolinate + succinyl-CoA + H2O = (S)-2-succinylamino-6-oxoheptanedioate + CoA. Its pathway is amino-acid biosynthesis; L-lysine biosynthesis via DAP pathway; LL-2,6-diaminopimelate from (S)-tetrahydrodipicolinate (succinylase route): step 1/3. This Rhodopseudomonas palustris (strain BisA53) protein is 2,3,4,5-tetrahydropyridine-2,6-dicarboxylate N-succinyltransferase.